The primary structure comprises 234 residues: Response regulator RppA (234 aa).

In terms of domain architecture, Response regulatory spans arginine 2–glutamine 118. Aspartate 53 carries the post-translational modification 4-aspartylphosphate. Positions proline 126–leucine 232 form a DNA-binding region, ompR/PhoB-type.

Interacts with histidine kinase Hik2; may accept phosphate from Hik2.

Its function is as follows. Member of two-component regulatory system RppA/RppB, involved in the establishment of the appropriate stoichiometry between the 2 photosystems. It senses changes in the plastoquinone (PQ) redox poise. Another group shows this two-component pair, renamed NrsR/NrsS, controls the nickel-dependent expression of the nrsBACD operon; they suggest the photosystem-related activities seen earlier are due to the expression of NrsS (RppB) in the absence of its natural substrate NrsR (RppA). May accept phosphate from Hik2 in a possible Hik2/RppA two-component system. The chain is Response regulator RppA from Synechocystis sp. (strain ATCC 27184 / PCC 6803 / Kazusa).